The following is a 521-amino-acid chain: Cytochrome P450 1A1 (521 aa).

Phenylalanine 229 is a substrate binding site. Cysteine 463 serves as a coordination point for heme.

It belongs to the cytochrome P450 family. It depends on heme as a cofactor.

The protein resides in the endoplasmic reticulum membrane. It is found in the microsome membrane. It catalyses the reaction an organic molecule + reduced [NADPH--hemoprotein reductase] + O2 = an alcohol + oxidized [NADPH--hemoprotein reductase] + H2O + H(+). In terms of biological role, cytochromes P450 are a group of heme-thiolate monooxygenases. They oxidize a variety of structurally unrelated compounds, including steroids, fatty acids, and xenobiotics. The sequence is that of Cytochrome P450 1A1 (cyp1a1) from Sparus aurata (Gilthead sea bream).